A 159-amino-acid polypeptide reads, in one-letter code: MISEKLQNAINEQISAEMWSSNLYLSMSFYFEREGFSGFAHWMKKQSQEEMGHAYAMADYIIKRGGIAKVDKIDVVPTGWGTPLEVFEHVFEHERHVSKLVDALVDIAAAEKDKATQDFLWGFVREQVEEEATAQGIVDKIKRAGDAGIFFIDSQLGQR.

The Ferritin-like diiron domain maps to Met-1–Gly-145. Fe cation-binding residues include Glu-17, Glu-50, His-53, Glu-94, and Gln-127.

The protein belongs to the ferritin family. Prokaryotic subfamily. Homooligomer of 24 subunits that assemble into a spherical protein shell (12 +/- 1 nM diameter) that can sequester at least 2000 iron atoms.

The catalysed reaction is 4 Fe(2+) + O2 + 6 H2O = 4 iron(III) oxide-hydroxide + 12 H(+). In terms of biological role, may alleviate iron toxicity in the presence of oxygen. The sequence is that of Bacterial non-heme ferritin (ftnA) from Bacteroides fragilis (strain 638R).